Here is a 788-residue protein sequence, read N- to C-terminus: Diacylglycerol kinase gamma (788 aa).

The span at 83–93 (PRQETPDHPKE) shows a compositional bias: basic and acidic residues. A disordered region spans residues 83–150 (PRQETPDHPK…WGEPNAPASS (68 aa)). Residues 95-109 (ASSSEPNVSDSNAES) show a composition bias toward polar residues. 2 EF-hand domains span residues 172–207 (RPQD…MLHV) and 217–252 (ELRP…TIPL). 8 residues coordinate Ca(2+): Asp-185, Asp-187, Asn-189, Glu-196, Asp-230, Asn-232, Asp-234, and Glu-241. Phorbol-ester/DAG-type zinc fingers lie at residues 268–318 (RHAW…IPGC) and 333–380 (QHAW…STAC). Residues 427–561 (PGTHPLLVLV…LDRWYLEVMP (135 aa)) form the DAGKc domain. A disordered region spans residues 768 to 788 (MMGPPQKSSFFSLRRKSRSKD).

It belongs to the eukaryotic diacylglycerol kinase family. In terms of tissue distribution, expressed specifically in brain. Highly expressed in cerebellar Purkinje cells (at protein level).

It is found in the membrane. The protein resides in the cytoplasm. Its subcellular location is the cytosol. It localises to the cytoskeleton. The catalysed reaction is a 1,2-diacyl-sn-glycerol + ATP = a 1,2-diacyl-sn-glycero-3-phosphate + ADP + H(+). The enzyme catalyses 1,2-didecanoyl-sn-glycerol + ATP = 1,2-didecanoyl-sn-glycero-3-phosphate + ADP + H(+). It catalyses the reaction 1,2-di-(9Z-octadecenoyl)-sn-glycerol + ATP = 1,2-di-(9Z-octadecenoyl)-sn-glycero-3-phosphate + ADP + H(+). It carries out the reaction 1-octadecanoyl-2-(9Z,12Z)-octadecadienoyl-sn-glycerol + ATP = 1-octadecanoyl-2-(9Z,12Z-octadecadienoyl)-sn-glycero-3-phosphate + ADP + H(+). The catalysed reaction is 1-octadecanoyl-2-(5Z,8Z,11Z,14Z-eicosatetraenoyl)-sn-glycerol + ATP = 1-octadecanoyl-2-(5Z,8Z,11Z,14Z-eicosatetraenoyl)-sn-glycero-3-phosphate + ADP + H(+). It functions in the pathway lipid metabolism; glycerolipid metabolism. With respect to regulation, the activity is calcium-dependent. Requires phosphatidylserine for maximal activity. Functionally, diacylglycerol kinase that converts diacylglycerol/DAG into phosphatidic acid/phosphatidate/PA and regulates the respective levels of these two bioactive lipids. Thereby, acts as a central switch between the signaling pathways activated by these second messengers with different cellular targets and opposite effects in numerous biological processes. Has no apparent specificity with regard to the acyl compositions of diacylglycerol. Specifically expressed in the cerebellum where it controls the level of diacylglycerol which in turn regulates the activity of protein kinase C gamma. Through protein kinase C gamma, indirectly regulates the dendritic development of Purkinje cells, cerebellar long term depression and ultimately cerebellar motor coordination. In Rattus norvegicus (Rat), this protein is Diacylglycerol kinase gamma (Dgkg).